The chain runs to 245 residues: 1-(5-phosphoribosyl)-5-[(5-phosphoribosylamino)methylideneamino] imidazole-4-carboxamide isomerase (245 aa).

The active-site Proton acceptor is the D8. D130 (proton donor) is an active-site residue.

It belongs to the HisA/HisF family.

The protein localises to the cytoplasm. The enzyme catalyses 1-(5-phospho-beta-D-ribosyl)-5-[(5-phospho-beta-D-ribosylamino)methylideneamino]imidazole-4-carboxamide = 5-[(5-phospho-1-deoxy-D-ribulos-1-ylimino)methylamino]-1-(5-phospho-beta-D-ribosyl)imidazole-4-carboxamide. It functions in the pathway amino-acid biosynthesis; L-histidine biosynthesis; L-histidine from 5-phospho-alpha-D-ribose 1-diphosphate: step 4/9. The polypeptide is 1-(5-phosphoribosyl)-5-[(5-phosphoribosylamino)methylideneamino] imidazole-4-carboxamide isomerase (Ectopseudomonas mendocina (strain ymp) (Pseudomonas mendocina)).